Consider the following 778-residue polypeptide: Transcription factor kayak (778 aa).

2 stretches are compositionally biased toward low complexity: residues 24–54 (AQQL…HTQQ) and 77–98 (QYYQ…QRQL). Disordered regions lie at residues 24 to 57 (AQQL…QNGL), 76 to 130 (NQYY…HQLR), 183 to 223 (QPTA…TTNG), 294 to 320 (APLV…VLAS), 356 to 414 (ASVM…GTGG), and 427 to 478 (RNTN…RKRR). Residues 99–108 (PTQQPAASYE) show a composition bias toward polar residues. 2 stretches are compositionally biased toward low complexity: residues 109–130 (QQQQ…HQLR) and 183–222 (QPTA…TTTN). Residues 382 to 402 (ISDTSSGATDSTSYQNGHMMG) are compositionally biased toward low complexity. Positions 403 to 414 (NSGGGNGGGTGG) are enriched in gly residues. Polar residues predominate over residues 427–436 (RNTNTSNSAT). The bZIP domain maps to 457 to 520 (EEKRRIRRER…NQLEYFLQAH (64 aa)). Positions 459 to 478 (KRRIRRERNKQAAARCRKRR) are basic motif. The tract at residues 485 to 513 (LTEEVELLEKRGENLKKEMELLNETKNQL) is leucine-zipper. A compositionally biased stretch (low complexity) spans 550–571 (GSCGSGSSHHNNNSNSNDSSSG). 2 disordered regions span residues 550 to 594 (GSCG…DLKP) and 756 to 778 (TSQN…LVSL). Residues 579–589 (TLNSTGRSNSP) are compositionally biased toward polar residues. A Phosphoserine modification is found at Ser588.

Belongs to the bZIP family. Fos subfamily. As to quaternary structure, homodimer. Heterodimer with Jra. The kay-Jra heterodimer binds more stably to the AP-1 site than either of the two proteins alone.

The protein localises to the nucleus. In terms of biological role, developmentally regulated transcription factor AP-1 binds and recognizes the enhancer DNA sequence: 5'-TGA[CG]TCA-3'. May play a role in the function or determination of a particular subset of cells in the developing embryo. It is able to carry out its function either independently of or in conjunction with Jra. This chain is Transcription factor kayak, found in Drosophila pseudoobscura pseudoobscura (Fruit fly).